A 166-amino-acid polypeptide reads, in one-letter code: Mitochondrial translation release factor in rescue (166 aa).

The transit peptide at 1 to 35 directs the protein to the mitochondrion; the sequence is MSTVGLFHFPTPLTRICPAPWGLRLWEKLTLLSPG. The segment at 57-121 is GGQ domain; it reads ENELEEQFVK…LQEKVDVFYN (65 aa). A GGQ motif is present at residues 71-73; the sequence is GGQ. Gln73 bears the N5-methylglutamine mark. The segment at 122–148 is disordered; that stretch reads GENSPVHKEKREAAKKKQERKKRAKET. Residues 126–137 are compositionally biased toward basic and acidic residues; it reads PVHKEKREAAKK. Residues 127 to 160 adopt a coiled-coil conformation; sequence VHKEKREAAKKKQERKKRAKETLEKKKLLKELWE.

Belongs to the prokaryotic/mitochondrial release factor family. In terms of assembly, interacts (via C-terminus) with MTRES1 (via S4 domain). Associates with mitoribosomal S39 large subunit, peptidyl tRNA and nascent chain. Methylation of glutamine in the GGQ triplet by HEMK1. Expressed in all areas of the brain tested.

Its subcellular location is the mitochondrion. Functionally, part of a mitoribosome-associated quality control pathway that prevents aberrant translation by responding to interruptions during elongation. As heterodimer with MTRES1, ejects the unfinished nascent chain and peptidyl transfer RNA (tRNA), respectively, from stalled ribosomes. Recruitment of mitoribosome biogenesis factors to these quality control intermediates suggests additional roles for MTRES1 and MTRF during mitoribosome rescue. The polypeptide is Mitochondrial translation release factor in rescue (Homo sapiens (Human)).